The sequence spans 299 residues: MADFLLRATAAAEGIRAVGVITTQLTDEARKRHQLSYVATAALGRTMAAGLILASSFKQPQARVNVRIQGNGPLGTIFADAGADGTVRGYVQYPSVELPPNAKGKLDVGAAVGHQGYLYVIHDLGYGYPYSSTVELVSGEIAEDITYYLATSEQTPSALMLGVFVEESGVTAAGGLMLQVLPKAANDEHLIATLEQRVANLKGFTPLLQAGRTLPDIFQELLGDMDLQILPQRQMVRFHCGCSHERMLAALKLLGEAELRDILATEAKAEATCQFCNAVYWADQPMLEQLIAELATASV.

Disulfide bonds link C240-C242 and C273-C276.

Belongs to the HSP33 family. Post-translationally, under oxidizing conditions two disulfide bonds are formed involving the reactive cysteines. Under reducing conditions zinc is bound to the reactive cysteines and the protein is inactive.

The protein localises to the cytoplasm. Redox regulated molecular chaperone. Protects both thermally unfolding and oxidatively damaged proteins from irreversible aggregation. Plays an important role in the bacterial defense system toward oxidative stress. The protein is 33 kDa chaperonin of Thermosynechococcus vestitus (strain NIES-2133 / IAM M-273 / BP-1).